We begin with the raw amino-acid sequence, 507 residues long: Probable cytosol aminopeptidase (507 aa).

Mn(2+) is bound by residues Lys-254 and Asp-259. Residue Lys-266 is part of the active site. Mn(2+) contacts are provided by Asp-277, Asp-336, and Glu-338. The active site involves Arg-340. The tract at residues 486-507 is disordered; it reads PRKAQPKARSAKRSKPVSRTRA. Basic residues predominate over residues 489-507; it reads AQPKARSAKRSKPVSRTRA.

This sequence belongs to the peptidase M17 family. It depends on Mn(2+) as a cofactor.

The protein localises to the cytoplasm. It carries out the reaction Release of an N-terminal amino acid, Xaa-|-Yaa-, in which Xaa is preferably Leu, but may be other amino acids including Pro although not Arg or Lys, and Yaa may be Pro. Amino acid amides and methyl esters are also readily hydrolyzed, but rates on arylamides are exceedingly low.. It catalyses the reaction Release of an N-terminal amino acid, preferentially leucine, but not glutamic or aspartic acids.. Its function is as follows. Presumably involved in the processing and regular turnover of intracellular proteins. Catalyzes the removal of unsubstituted N-terminal amino acids from various peptides. The sequence is that of Probable cytosol aminopeptidase from Polaromonas sp. (strain JS666 / ATCC BAA-500).